Consider the following 428-residue polypeptide: ATP-dependent RNA helicase RhlB (428 aa).

The Q motif motif lies at 9 to 37; sequence QKFSDFALHPLVVEALENKGFQYCTPIQA. The 180-residue stretch at 40 to 219 folds into the Helicase ATP-binding domain; sequence LPLTLSGRDV…FEQMNNAEYV (180 aa). 53–60 lines the ATP pocket; sequence AQTGTGKT. The DEAD box motif lies at 165–168; sequence DEAD. The region spanning 245–390 is the Helicase C-terminal domain; the sequence is RLLQTLIEEE…VSKYNSDALL (146 aa). Residues 394-428 are disordered; sequence PAPKRLARTRTGNGPRRNSAPRRSGAPRNNRKRPG.

It belongs to the DEAD box helicase family. RhlB subfamily. In terms of assembly, component of the RNA degradosome, which is a multiprotein complex involved in RNA processing and mRNA degradation.

It is found in the cytoplasm. The enzyme catalyses ATP + H2O = ADP + phosphate + H(+). In terms of biological role, DEAD-box RNA helicase involved in RNA degradation. Has RNA-dependent ATPase activity and unwinds double-stranded RNA. The protein is ATP-dependent RNA helicase RhlB of Yersinia pseudotuberculosis serotype O:1b (strain IP 31758).